The primary structure comprises 311 residues: Ornithine carbamoyltransferase (311 aa).

Carbamoyl phosphate is bound by residues 56 to 59 (STRT), glutamine 83, arginine 107, and 134 to 137 (HPTQ). L-ornithine is bound by residues asparagine 166, aspartate 230, and 234-235 (SM). Carbamoyl phosphate contacts are provided by residues 270–271 (CL) and lysine 298.

It belongs to the aspartate/ornithine carbamoyltransferase superfamily. OTCase family.

The protein localises to the cytoplasm. It carries out the reaction carbamoyl phosphate + L-ornithine = L-citrulline + phosphate + H(+). The protein operates within amino-acid degradation; L-arginine degradation via ADI pathway; carbamoyl phosphate from L-arginine: step 2/2. Functionally, reversibly catalyzes the transfer of the carbamoyl group from carbamoyl phosphate (CP) to the N(epsilon) atom of ornithine (ORN) to produce L-citrulline. The protein is Ornithine carbamoyltransferase of Ignicoccus hospitalis (strain KIN4/I / DSM 18386 / JCM 14125).